We begin with the raw amino-acid sequence, 334 residues long: L-lactate dehydrogenase B chain (334 aa).

Ala2 is modified (N-acetylalanine). Position 7 is an N6-acetyllysine (Lys7). Residues Ser11 and Ser44 each carry the phosphoserine modification. NAD(+) contacts are provided by residues 30 to 58 (GQVG…LEDK) and Arg100. The residue at position 58 (Lys58) is an N6-acetyllysine. Arg107 contacts substrate. N6-acetyllysine is present on Lys119. An NAD(+)-binding site is contributed by Asn139. Substrate is bound by residues Asn139 and Arg170. Residue His194 is the Proton acceptor of the active site. The residue at position 240 (Tyr240) is a Phosphotyrosine. A substrate-binding site is contributed by Thr249. Residue Lys329 is modified to N6-acetyllysine.

The protein belongs to the LDH/MDH superfamily. LDH family. Homotetramer. Interacts with PTEN upstream reading frame protein MP31; the interaction leads to inhibition of mitochondrial lactate dehydrogenase activity, preventing conversion of lactate to pyruvate in mitochondria.

It is found in the cytoplasm. The protein resides in the mitochondrion inner membrane. It carries out the reaction (S)-lactate + NAD(+) = pyruvate + NADH + H(+). Its pathway is fermentation; pyruvate fermentation to lactate; (S)-lactate from pyruvate: step 1/1. Interconverts simultaneously and stereospecifically pyruvate and lactate with concomitant interconversion of NADH and NAD(+). The sequence is that of L-lactate dehydrogenase B chain (Ldhb) from Mus musculus (Mouse).